The sequence spans 157 residues: Mitochondrial inner membrane protease subunit 1 (157 aa).

Active-site residues include serine 35 and lysine 80.

Belongs to the peptidase S26 family. IMP1 subfamily. As to quaternary structure, heterodimer of 2 subunits, imp1 and imp2.

It localises to the mitochondrion inner membrane. In terms of biological role, catalyzes the removal of transit peptides required for the targeting of proteins from the mitochondrial matrix, across the inner membrane, into the inter-membrane space. This Schizosaccharomyces pombe (strain 972 / ATCC 24843) (Fission yeast) protein is Mitochondrial inner membrane protease subunit 1 (imp1).